Consider the following 265-residue polypeptide: MQPDLHCRTLAAHTLKHFRALSPLTHCMTNDVVQTFTANTLLALGASPAMVIDPVEARPFAAIANALLVNVGTLTASRADAMRGAVESAYDAKTPWTLDPVAVGALEFRRRFCLDLLSLRPAAIRGNASEILALSGMALGGRGVDTTEAALAALPAAQALARQIDCIVVVTGEVDYVTNGQRTLSIPGGDPLMTRIVGTGCALSAVVAASCALPGAALDNVASACCWMKLAGQAAAERSEGPGSFIPAFLDALYHLDVEAANATN.

M50 lines the substrate pocket. 2 residues coordinate ATP: R125 and T171. G198 is a binding site for substrate.

It belongs to the Thz kinase family. Mg(2+) serves as cofactor.

It catalyses the reaction 5-(2-hydroxyethyl)-4-methylthiazole + ATP = 4-methyl-5-(2-phosphooxyethyl)-thiazole + ADP + H(+). Its pathway is cofactor biosynthesis; thiamine diphosphate biosynthesis; 4-methyl-5-(2-phosphoethyl)-thiazole from 5-(2-hydroxyethyl)-4-methylthiazole: step 1/1. Functionally, catalyzes the phosphorylation of the hydroxyl group of 4-methyl-5-beta-hydroxyethylthiazole (THZ). This Salmonella agona (strain SL483) protein is Hydroxyethylthiazole kinase.